The primary structure comprises 478 residues: Patatin-like phospholipase domain-containing protein 2 (478 aa).

Residues 1–8 (MFPRETKW) lie on the Cytoplasmic side of the membrane. Residues 9-29 (NISFAGCGFLGVYHIGVASCL) traverse the membrane as a helical segment. The PNPLA domain occupies 10 to 179 (ISFAGCGFLG…SDNLPLYELK (170 aa)). Positions 14–19 (GCGFLG) match the GXGXXG motif. The Extracellular segment spans residues 30–42 (REHAPFLVANATH). N39 carries an N-linked (GlcNAc...) asparagine glycan. The helical transmembrane segment at 43-63 (IYGASAGALTATALVTGACLG) threads the bilayer. A GXSXG motif is present at residues 45 to 49 (GASAG). S47 (nucleophile) is an active-site residue. The Cytoplasmic portion of the chain corresponds to 64 to 137 (EAGANIIEVS…IISHFSSKDE (74 aa)). K92 participates in a covalent cross-link: Glycyl lysine isopeptide (Lys-Gly) (interchain with G-Cter in ubiquitin). Residues 138–158 (LIQANVCSTFIPVYCGLIPPT) traverse the membrane as a helical segment. Residues 159–323 (LQGVRYVDGG…TTLSNMLPVR (165 aa)) are Extracellular-facing. D166 functions as the Proton acceptor in the catalytic mechanism. Positions 166 to 168 (DGG) match the DGA/G motif. A helical membrane pass occupies residues 324 to 344 (LATAMMVPYTLPLESAVSFTI). At 345-478 (RLLEWLPDVP…PQDPSGLPPC (134 aa)) the chain is on the cytoplasmic side. S366 is subject to Phosphoserine; in vitro. A Phosphoserine; by PKA modification is found at S388. Residues S398 and S422 each carry the phosphoserine modification. The segment at 456-478 (RAPASPTATDPATPQDPSGLPPC) is disordered. Residues 457 to 478 (APASPTATDPATPQDPSGLPPC) are compositionally biased toward low complexity. S460 is modified (phosphoserine; in vitro).

In terms of assembly, interacts with ABHD5; this association stimulates PNPLA2 triglyceride hydrolase activity. Interacts with SERPINF1; this interaction stimulates the phospholipase A2 activity of PNPLA2. Despite a colocalization in lipid droplets, it probably does not interact with PLIN. Interacts with PLIN5; prevents interaction with ABHD5. Interacts with FAF2. Phosphorylation at Ser-398 by PKA is increased during fasting and moderate intensity exercise, and moderately increases lipolytic activity. In terms of processing, ubiquitinated by PEX2 in response to reactive oxygen species (ROS), leading to its degradation. Ubiquitination is stimulated by LDAH.

It is found in the lipid droplet. The protein localises to the cell membrane. Its subcellular location is the cytoplasm. The catalysed reaction is a triacylglycerol + H2O = a diacylglycerol + a fatty acid + H(+). It carries out the reaction a triacylglycerol + H2O = a 1,2-diacylglycerol + a fatty acid + H(+). The enzyme catalyses a triacylglycerol + H2O = a 1,3-diacylglycerol + a fatty acid + H(+). It catalyses the reaction a triacyl-sn-glycerol + H2O = a 1,3-diacyl-sn-glycerol + a fatty acid + H(+). The catalysed reaction is a triacyl-sn-glycerol + H2O = a 2,3-diacyl-sn-glycerol + a fatty acid + H(+). It carries out the reaction a 1-acylglycerol + a 1,3-diacylglycerol = a triacylglycerol + glycerol. The enzyme catalyses a 1-acylglycerol + a 1,2-diacylglycerol = a triacylglycerol + glycerol. It catalyses the reaction 2 a 1-acylglycerol = a 1,2-diacylglycerol + glycerol. The catalysed reaction is a triacylglycerol + all-trans-retinol = an all-trans-retinyl ester + a diacylglycerol. It carries out the reaction 1,2-di-(9Z-octadecenoyl)-glycerol + (9Z)-octadecenoate + H(+) = 1,2,3-tri-(9Z-octadecenoyl)-glycerol + H2O. The enzyme catalyses 1,2,3-tri-(9Z-octadecenoyl)-glycerol + H2O = 1,3-di-(9Z-octadecenoyl)-glycerol + (9Z)-octadecenoate + H(+). It catalyses the reaction 1-(9Z-octadecenoyl)-glycerol + 1,3-di-(9Z-octadecenoyl)-glycerol = 1,2,3-tri-(9Z-octadecenoyl)-glycerol + glycerol. The catalysed reaction is 1-(9Z-octadecenoyl)-glycerol + 1,2-di-(9Z-octadecenoyl)-glycerol = 1,2,3-tri-(9Z-octadecenoyl)-glycerol + glycerol. It carries out the reaction 2 1-(9Z-octadecenoyl)-glycerol = 1,2-di-(9Z-octadecenoyl)-glycerol + glycerol. The enzyme catalyses 1,2,3-tri-(9Z-octadecenoyl)-glycerol + all-trans-retinol = all-trans-retinyl 9Z-octadecenoate + di-(9Z)-octadecenoylglycerol. It catalyses the reaction 1,2,3-tri-(9Z)-hexadecenoylglycerol + H2O = 1,3-di-(9Z)-hexadecenoylglycerol + (9Z)-hexadecenoate + H(+). The catalysed reaction is 1,2,3-tri-(9Z,12Z)-octadecadienoylglycerol + H2O = 1,3-di-(9Z,12Z)-octadecadienoylglycerol + (9Z,12Z)-octadecadienoate + H(+). It carries out the reaction 1,2,3-tri-(9Z,12Z,15Z)-octadecatrienoylglycerol + H2O = 1,3-di-(9Z,12Z,15Z)-octadecatrienoylglycerol + (9Z,12Z,15Z)-octadecatrienoate + H(+). The enzyme catalyses 1,3-di-(9Z)-octadecenoyl-2-hexadecanoylglycerol + H2O = 1,3-di-(9Z-octadecenoyl)-glycerol + hexadecanoate + H(+). It catalyses the reaction 1,2-di-(9Z)-octadecenoyl-3-hexadecanoyl-sn-glycerol + H2O = 1-(9Z)-octadecenoyl-3-hexadecanoyl-sn-glycerol + (9Z)-octadecenoate + H(+). The catalysed reaction is 1-hexadecanoyl-2,3-di-(9Z)-octadecenoyl-sn-glycerol + H2O = 1-hexadecanoyl-3-(9Z)-octadecenoyl-sn-glycerol + (9Z)-octadecenoate + H(+). It carries out the reaction 1,2,3-tri-(9Z-octadecenoyl)-glycerol + H2O = 2,3-di-(9Z)-octadecenoyl-sn-glycerol + (9Z)-octadecenoate + H(+). The enzyme catalyses 1,2,3-tri-(9Z)-hexadecenoylglycerol + H2O = 2,3-di-(9Z)-hexadecenoyl-sn-glycerol + (9Z)-hexadecenoate + H(+). It catalyses the reaction 1,2,3-tri-(9Z,12Z)-octadecadienoylglycerol + H2O = 2,3-di-(9Z,12Z)-octadecadienoyl-sn-glycerol + (9Z,12Z)-octadecadienoate + H(+). The catalysed reaction is 1,2,3-tri-(9Z,12Z,15Z)-octadecatrienoylglycerol + H2O = 2,3-di-(9Z,12Z,15Z)-octadecatrienoyl-sn-glycerol + (9Z,12Z,15Z)-octadecatrienoate + H(+). It carries out the reaction 1,3-di-(9Z)-octadecenoyl-2-hexadecanoylglycerol + H2O = 2-hexadecanoyl-3-(9Z)-octadecenoyl-sn-glycerol + (9Z)-octadecenoate + H(+). The enzyme catalyses 1-hexadecanoyl-2,3-di-(9Z)-octadecenoyl-sn-glycerol + H2O = 2,3-di-(9Z)-octadecenoyl-sn-glycerol + hexadecanoate + H(+). It catalyses the reaction 1,2-di-(9Z)-octadecenoyl-3-hexadecanoyl-sn-glycerol + H2O = 2-(9Z-octadecenoyl)-3-hexadecanoyl-sn-glycerol + (9Z)-octadecenoate + H(+). The catalysed reaction is a 1,2-diacyl-sn-glycero-3-phosphocholine + H2O = a 1-acyl-sn-glycero-3-phosphocholine + a fatty acid + H(+). It carries out the reaction 1,2,3-tri-(9Z-octadecenoyl)-glycerol + 9-hydroxy-octadecanoate = 9-(9Z-octadecenoyloxy)-octadecanoate + 2,3-di-(9Z)-octadecenoyl-sn-glycerol. The enzyme catalyses 1-hexadecanoyl-2,3-di-(9Z)-octadecenoyl-sn-glycerol + 9-hydroxy-octadecanoate = 9-hexadecanoyloxy-octadecanoate + 2,3-di-(9Z)-octadecenoyl-sn-glycerol. It catalyses the reaction 1,2,3-tri-(10Z)-heptadecenoylglycerol + 9-hydroxy-octadecanoate = 2,3-di-(10Z-heptadecenoyl)-sn-glycerol + 9-(10Z-heptadecenoyloxy)-octadecanoate. The catalysed reaction is 1,2,3-tri-(9Z,12Z)-octadecadienoylglycerol + 9-hydroxy-octadecanoate = 2,3-di-(9Z,12Z)-octadecadienoyl-sn-glycerol + 9-(9Z,12Z-octadecadienoyloxy)-octadecanoate. It carries out the reaction 1,2,3-tri-(9Z)-hexadecenoylglycerol + 9-hydroxy-octadecanoate = 2,3-di-(9Z)-hexadecenoyl-sn-glycerol + 9-(9Z-hexadecenoyloxy)-octadecanoate. The enzyme catalyses 9-hydroxy-octadecanoate + 1,2-di-(9Z-octadecenoyl)-sn-glycerol = 9-(9Z-octadecenoyloxy)-octadecanoate + 2-(9Z-octadecenoyl)-glycerol. It catalyses the reaction 1-hexadecanoyl-2,3-di-(9Z)-octadecenoyl-sn-glycerol + 9-hydroxy-octadecanoate = 1-hexadecanoyl-3-(9Z)-octadecenoyl-sn-glycerol + 9-(9Z-octadecenoyloxy)-octadecanoate. It functions in the pathway glycerolipid metabolism; triacylglycerol degradation. Functionally, catalyzes the initial step in triglyceride hydrolysis in adipocyte and non-adipocyte lipid droplets. Exhibits a strong preference for the hydrolysis of long-chain fatty acid esters at the sn-2 position of the glycerol backbone and acts coordinately with LIPE/HLS and DGAT2 within the lipolytic cascade. Also possesses acylglycerol transacylase and phospholipase A2 activities. Transfers fatty acid from triglyceride to retinol, hydrolyzes retinylesters, and generates 1,3-diacylglycerol from triglycerides. Regulates adiposome size and may be involved in the degradation of adiposomes. Catalyzes the formation of an ester bond between hydroxy fatty acids and fatty acids derived from triglycerides or diglycerides to generate fatty acid esters of hydroxy fatty acids (FAHFAs) in adipocytes. Acts antagonistically with LDAH in regulation of cellular lipid stores. Inhibits LDAH-stimulated lipid droplet fusion. May play an important role in energy homeostasis. May play a role in the response of the organism to starvation, enhancing hydrolysis of triglycerides and providing free fatty acids to other tissues to be oxidized in situations of energy depletion. This chain is Patatin-like phospholipase domain-containing protein 2, found in Rattus norvegicus (Rat).